The following is an 893-amino-acid chain: Protein FAM186B (893 aa).

Disordered regions lie at residues 177 to 207 (GWQGRSPQTSPSHPQPLSPEQMLQDQHTMNT), 327 to 376 (QAED…PSPM), 537 to 557 (LEKEQESPRREPEQLGEDVER), 574 to 611 (LSLVPAPSRTQSAHQSRRPHLPMSPSTQQPALGKQRPM), and 806 to 827 (KPKKCKLPAASPRHIRPSGPTY). 2 stretches are compositionally biased toward polar residues: residues 179–188 (QGRSPQTSPS) and 197–207 (QMLQDQHTMNT). A coiled-coil region spans residues 303 to 331 (RYHDLLLMKQALEFQLKKAQNATGQAEDL). Over residues 342–353 (SERETLPRKETV) the composition is skewed to basic and acidic residues.

This sequence belongs to the FAM186 family.

The sequence is that of Protein FAM186B (FAM186B) from Homo sapiens (Human).